Reading from the N-terminus, the 393-residue chain is Formate-dependent phosphoribosylglycinamide formyltransferase (393 aa).

Residues 22–23 (EL) and Glu82 each bind N(1)-(5-phospho-beta-D-ribosyl)glycinamide. ATP-binding positions include Arg114, Lys155, 160–165 (SSGKGQ), 195–198 (ESFV), and Glu203. In terms of domain architecture, ATP-grasp spans 119-308 (RLAAEEVGLK…EFALHVRAIL (190 aa)). Mg(2+) is bound by residues Glu267 and Glu279. Residues Asp286, Lys356, and 363–364 (RR) contribute to the N(1)-(5-phospho-beta-D-ribosyl)glycinamide site.

Belongs to the PurK/PurT family. In terms of assembly, homodimer.

The catalysed reaction is N(1)-(5-phospho-beta-D-ribosyl)glycinamide + formate + ATP = N(2)-formyl-N(1)-(5-phospho-beta-D-ribosyl)glycinamide + ADP + phosphate + H(+). It functions in the pathway purine metabolism; IMP biosynthesis via de novo pathway; N(2)-formyl-N(1)-(5-phospho-D-ribosyl)glycinamide from N(1)-(5-phospho-D-ribosyl)glycinamide (formate route): step 1/1. In terms of biological role, involved in the de novo purine biosynthesis. Catalyzes the transfer of formate to 5-phospho-ribosyl-glycinamide (GAR), producing 5-phospho-ribosyl-N-formylglycinamide (FGAR). Formate is provided by PurU via hydrolysis of 10-formyl-tetrahydrofolate. This Maridesulfovibrio salexigens (strain ATCC 14822 / DSM 2638 / NCIMB 8403 / VKM B-1763) (Desulfovibrio salexigens) protein is Formate-dependent phosphoribosylglycinamide formyltransferase.